Reading from the N-terminus, the 524-residue chain is MVRRALVSVSDKTGLVPFAKRLAALGVEILSTGGTQRALADAGVPVVSVGDYTQAPEILAGRVKTLHPRVHGGILYRRGLASDEADVKARDIPPIDLVVVNLYPFREAVAAGKPFWDCVEEIDIGGPTMVRSAAKNAAHVGVVVDPADYERVAAELEASRALSDQTRFELMKKAFAHTAAYDAAISEFLTARESTDAQAKRFPATLAAVYSKAGDLRYGENPHQAGAFYRAGREPDEPTVAFAKVLQGKELSYNNLLDLEAALAAVKEHDEVACVVIKHNTPCGVSLGKTPAEAFARARACDPVSAFGGIVALNRPVDAAAAKELTDLFLECVIAPGYDEAARAALGAKKNLRLLEAPRLAEPRTSWTRRPEELRELRSIPGGLLVMDRDLGAIRRDDCKVMTKRAPTDAEWEDLLFAWKVVKHVKSNAIVFAKEKRTVGIGGGQTSRVESVKTAVMKAQLELVGSTVGSDAFFPFKDGVEEIIKAGATAIIQPGGSVRDPEVIEAADAANVAMVATGMRHFRH.

Positions 1-144 constitute an MGS-like domain; the sequence is MVRRALVSVS…KNAAHVGVVV (144 aa).

It belongs to the PurH family.

The enzyme catalyses (6R)-10-formyltetrahydrofolate + 5-amino-1-(5-phospho-beta-D-ribosyl)imidazole-4-carboxamide = 5-formamido-1-(5-phospho-D-ribosyl)imidazole-4-carboxamide + (6S)-5,6,7,8-tetrahydrofolate. It catalyses the reaction IMP + H2O = 5-formamido-1-(5-phospho-D-ribosyl)imidazole-4-carboxamide. Its pathway is purine metabolism; IMP biosynthesis via de novo pathway; 5-formamido-1-(5-phospho-D-ribosyl)imidazole-4-carboxamide from 5-amino-1-(5-phospho-D-ribosyl)imidazole-4-carboxamide (10-formyl THF route): step 1/1. The protein operates within purine metabolism; IMP biosynthesis via de novo pathway; IMP from 5-formamido-1-(5-phospho-D-ribosyl)imidazole-4-carboxamide: step 1/1. This Anaeromyxobacter sp. (strain Fw109-5) protein is Bifunctional purine biosynthesis protein PurH.